A 160-amino-acid polypeptide reads, in one-letter code: Nascent polypeptide-associated complex subunit beta (160 aa).

Disordered stretches follow at residues 16–36 and 118–160; these read GGKG…GTDD and ESYQ…TEVE. Residues 20–30 show a composition bias toward basic residues; that stretch reads TPRRKVKKVHK. The NAC-A/B domain maps to 33–98; that stretch reads GTDDKKLQTA…GEDKELTELV (66 aa). Positions 124–134 are enriched in basic and acidic residues; it reads QKEKGEDGDKK. Residues 135-145 are compositionally biased toward acidic residues; it reads DDDDEDDDDIP.

The protein belongs to the NAC-beta family. As to quaternary structure, part of the nascent polypeptide-associated complex (NAC), consisting of EGD2 and EGD1. NAC associates with ribosomes via EGD1.

Its subcellular location is the cytoplasm. It is found in the nucleus. Component of the nascent polypeptide-associated complex (NAC), a dynamic component of the ribosomal exit tunnel, protecting the emerging polypeptides from interaction with other cytoplasmic proteins to ensure appropriate nascent protein targeting. The NAC complex also promotes mitochondrial protein import by enhancing productive ribosome interactions with the outer mitochondrial membrane and blocks the inappropriate interaction of ribosomes translating non-secretory nascent polypeptides with translocation sites in the membrane of the endoplasmic reticulum. EGD1 may act as a transcription factor that exert a negative effect on the expression of several genes that are transcribed by RNA polymerase II. This chain is Nascent polypeptide-associated complex subunit beta (EGD1), found in Phaeosphaeria nodorum (strain SN15 / ATCC MYA-4574 / FGSC 10173) (Glume blotch fungus).